Reading from the N-terminus, the 355-residue chain is Uroporphyrinogen decarboxylase (355 aa).

Residues 36 to 40 (RQAGR), aspartate 85, tyrosine 160, serine 215, and histidine 334 each bind substrate.

It belongs to the uroporphyrinogen decarboxylase family. Homodimer.

It localises to the cytoplasm. It catalyses the reaction uroporphyrinogen III + 4 H(+) = coproporphyrinogen III + 4 CO2. Its pathway is porphyrin-containing compound metabolism; protoporphyrin-IX biosynthesis; coproporphyrinogen-III from 5-aminolevulinate: step 4/4. Catalyzes the decarboxylation of four acetate groups of uroporphyrinogen-III to yield coproporphyrinogen-III. This Rhodococcus erythropolis (strain PR4 / NBRC 100887) protein is Uroporphyrinogen decarboxylase.